The following is a 925-amino-acid chain: MNAPERQPQPDGGDAPGHEPGGSPQDELDFSILFDYEYLNPNEEEPNAHKVASPPSGPAYPDDVLDYGLKPYSPLASLSGEPPGRFGEPDRVGPQKFLSAAKPAGASGLSPRIEITPSHELIQAVGPLRMRDAGLLVEQPPLAGVAASPRFTLPVPGFEGYREPLCLSPASSGSSASFISDTFSPYTSPCVSPNNGGPDDLCPQFQNIPAHYSPRTSPIMSPRTSLAEDSCLGRHSPVPRPASRSSSPGAKRRHSCAEALVALPPGASPQRSRSPSPQPSSHVAPQDHGSPAGYPPVAGSAVIMDALNSLATDSPCGIPPKMWKTSPDPSPVSAAPSKAGLPRHIYPAVEFLGPCEQGERRNSAPESILLVPPTWPKPLVPAIPICSIPVTASLPPLEWPLSSQSGSYELRIEVQPKPHHRAHYETEGSRGAVKAPTGGHPVVQLHGYMENKPLGLQIFIGTADERILKPHAFYQVHRITGKTVTTTSYEKIVGNTKVLEIPLEPKNNMRATIDCAGILKLRNADIELRKGETDIGRKNTRVRLVFRVHIPESSGRIVSLQTASNPIECSQRSAHELPMVERQDTDSCLVYGGQQMILTGQNFTSESKVVFTEKTTDGQQIWEMEATVDKDKSQPNMLFVEIPEYRNKHIRTPVKVNFYVINGKRKRSQPQHFTYHPVPAIKTEPTDEYDPTLICSPTHGGLGSQPYYPQHPMVAESPSCLVATMAPCQQFRTGLSSPDARYQQQNPAAVLYQRSKSLSPSLLGYQQPALMAAPLSLADAHRSVLVHAGSQGQSSALLHPSPTNQQASPVIHYSPTNQQLRCGSHQEFQHIMYCENFAPGTTRPGPPPVSQGQRLSPGSYPTVIQQQNATSQRAAKNGPPVSDQKEVLPAGVTIKQEQNLDQTYLDDVNEIIRKEFSGPPARNQT.

The disordered stretch occupies residues 1–95 (MNAPERQPQP…FGEPDRVGPQ (95 aa)). Position 23 is a phosphoserine (Ser-23). The 9aaTAD signature appears at 26 to 34 (DELDFSILF). A phosphoserine mark is found at Ser-99, Ser-107, and Ser-110. The interval 111-116 (PRIEIT) is calcineurin-binding. Residues 119 to 199 (HELIQAVGPL…CVSPNNGGPD (81 aa)) are transactivation domain A (TAD-A). A phosphoserine mark is found at Ser-148, Ser-168, Ser-171, Ser-172, Ser-174, Ser-175, Ser-177, and Ser-180. The tract at residues 161–175 (YREPLCLSPASSGSS) is required for cytoplasmic retention of the phosphorylated form. 2 consecutive repeat copies span residues 184 to 200 (SPYT…GPDD) and 213 to 229 (SPRT…LAED). The tract at residues 184–286 (SPYTSPCVSP…PQPSSHVAPQ (103 aa)) is 3 X approximate SP repeats. The segment at 195 to 297 (NGGPDDLCPQ…HGSPAGYPPV (103 aa)) is disordered. Ser-213, Ser-217, Ser-221, Ser-236, and Ser-243 each carry phosphoserine. The span at 214–224 (PRTSPIMSPRT) shows a compositional bias: polar residues. Positions 251–253 (KRR) match the Nuclear localization signal motif. A phosphoserine mark is found at Ser-255, Ser-268, Ser-274, Ser-276, Ser-280, Ser-326, Ser-330, and Ser-363. Residues 264–281 (PPGASPQRSRSPSPQPSS) are compositionally biased toward low complexity. The stretch at 272–286 (SRSPSPQPSSHVAPQ) is one 3; approximate repeat. One can recognise an RHD domain in the interval 392–574 (ASLPPLEWPL…NPIECSQRSA (183 aa)). Residues 421–428 (RAHYETEG) mediate DNA binding. The short motif at 664–666 (KRK) is the Nuclear localization signal element. 5 positions are modified to phosphoserine: Ser-755, Ser-757, Ser-759, Ser-856, and Ser-859. The interval 839-894 (PGTTRPGPPPVSQGQRLSPGSYPTVIQQQNATSQRAAKNGPPVSDQKEVLPAGVTI) is disordered. Over residues 862–874 (TVIQQQNATSQRA) the composition is skewed to polar residues. The Nuclear export signal motif lies at 904-913 (YLDDVNEIIR).

Member of the multicomponent NFATC transcription complex that consists of at least two components, a pre-existing cytoplasmic component NFATC2 and an inducible nuclear component NFATC1. Other members such as NFATC4, NFATC3 or members of the activating protein-1 family, MAF, GATA4 and Cbp/p300 can also bind the complex. The phosphorylated form specifically interacts with XPO1; which mediates nuclear export. NFATC proteins bind to DNA as monomers. Interacts with NFATC2IP. Interacts with FOXP3. Interacts with TBX21 ('Thr-303' phosphorylated form). Interacts with KAT2A. Interacts with HOMER2 and HOMER3; this interaction competes with calcineurin/PPP3CA-binding and hence prevents NFATC2 dephosphorylation and activation. Interacts with protein phosphatase PPP3CA/calcineurin A. Interacts with AKAP5 (via leucine zipper domain); this is required for NFATC2/NFAT1 recruitment to CRAC channels. In resting cells, phosphorylated by NFATC-kinase on at least 18 sites in the 99-363 region. Upon cell stimulation, all these sites except Ser-243 are dephosphorylated by calcineurin. Dephosphorylation induces a conformational change that simultaneously exposes an NLS and masks an NES, which results in nuclear localization. Simultaneously, Ser-53 or Ser-56 is phosphorylated; which is required for full transcriptional activity. In terms of processing, ubiquitinated in endothelial cells by RNF213 downstream of the non-canonical Wnt signaling pathway, leading to its degradation by the proteasome. As to expression, expressed in thymus, spleen, heart, testis, brain, placenta, muscle and pancreas. Isoform 1 is highly expressed in the small intestine, heart, testis, prostate, thymus, placenta and thyroid. Isoform 3 is highly expressed in stomach, uterus, placenta, trachea and thyroid.

It is found in the cytoplasm. The protein resides in the nucleus. In terms of biological role, plays a role in the inducible expression of cytokine genes in T-cells, especially in the induction of the IL-2, IL-3, IL-4, TNF-alpha or GM-CSF. Promotes invasive migration through the activation of GPC6 expression and WNT5A signaling pathway. Is involved in the negative regulation of chondrogenesis. Recruited by AKAP5 to ORAI1 pore-forming subunit of CRAC channels in Ca(2+) signaling microdomains where store-operated Ca(2+) influx is coupled to calmodulin and calcineurin signaling and activation of NFAT-dependent transcriptional responses. The chain is Nuclear factor of activated T-cells, cytoplasmic 2 (NFATC2) from Homo sapiens (Human).